We begin with the raw amino-acid sequence, 548 residues long: Uridine-cytidine kinase-like 1 (548 aa).

Residues 1 to 18 are compositionally biased toward low complexity; the sequence is MAAPPASMSAAPSPLQSA. The disordered stretch occupies residues 1-74; that stretch reads MAAPPASMSA…CKSEPPLLRT (74 aa). Phosphoserine is present on residues serine 56 and serine 63. 105–112 is a binding site for ATP; that stretch reads GGSASGKT. Serine 539 is subject to Phosphoserine.

Belongs to the uridine kinase family. In terms of assembly, interacts with RNF19B. Post-translationally, ubiquitinated by RNF19B; which induces proteasomal degradation.

It is found in the cytoplasm. It localises to the nucleus. The catalysed reaction is uridine + ATP = UMP + ADP + H(+). The enzyme catalyses cytidine + ATP = CMP + ADP + H(+). The protein operates within pyrimidine metabolism; UMP biosynthesis via salvage pathway; UMP from uridine: step 1/1. In terms of biological role, may contribute to UTP accumulation needed for blast transformation and proliferation. The protein is Uridine-cytidine kinase-like 1 (Uckl1) of Mus musculus (Mouse).